A 144-amino-acid chain; its full sequence is INO80 complex subunit 5 (144 aa).

The tract at residues 1 to 58 (MAAQKKQGERVLPARSTRKRRQLPDMLYYDERTDSYVTPQERSLSEANAQTRPAPNTI) is disordered. The span at 35–58 (SYVTPQERSLSEANAQTRPAPNTI) shows a compositional bias: polar residues.

As to quaternary structure, component of the INO80 chromatin remodeling complex.

It is found in the nucleus. Functionally, component of the INO80 complex which remodels chromatin by shifting nucleosomes and is involved in DNA repair. The polypeptide is INO80 complex subunit 5 (iec5) (Schizosaccharomyces pombe (strain 972 / ATCC 24843) (Fission yeast)).